The primary structure comprises 526 residues: Glutamate--tRNA ligase, mitochondrial (526 aa).

The N-terminal 38 residues, 1–38, are a transit peptide targeting the mitochondrion; sequence MLSYTSCAKLICSRYIVSKISFYSLKRCNSTAVVRTRF. Position 37 to 39 (37 to 39) interacts with L-glutamate; the sequence is RFA. A 'HIGH' region motif is present at residues 42 to 50; sequence PTGFLHLGS. His-47 lines the ATP pocket. Residues Glu-73, 222 to 226, and Arg-240 contribute to the L-glutamate site; that span reads YHFAN. Residues Glu-243 and 278–282 contribute to the ATP site; that span reads KLSKR. The 'KMSKS' region motif lies at 278–282; the sequence is KLSKR.

This sequence belongs to the class-I aminoacyl-tRNA synthetase family. Glutamate--tRNA ligase type 1 subfamily.

It is found in the mitochondrion. It carries out the reaction tRNA(Glu) + L-glutamate + ATP = L-glutamyl-tRNA(Glu) + AMP + diphosphate. Functionally, catalyzes the attachment of glutamate to tRNA(Glu) in a two-step reaction: glutamate is first activated by ATP to form Glu-AMP and then transferred to the acceptor end of tRNA(Glu). The sequence is that of Glutamate--tRNA ligase, mitochondrial (mse1) from Schizosaccharomyces pombe (strain 972 / ATCC 24843) (Fission yeast).